Reading from the N-terminus, the 296-residue chain is Enoyl-CoA hydratase domain-containing protein 2, mitochondrial (296 aa).

The N-terminal 17 residues, 1–17 (MLRVLPRALRLPCSWRF), are a transit peptide targeting the mitochondrion. An N6-acetyllysine; alternate modification is found at Lys101. At Lys101 the chain carries N6-succinyllysine; alternate.

Belongs to the enoyl-CoA hydratase/isomerase family.

The protein localises to the mitochondrion. This is Enoyl-CoA hydratase domain-containing protein 2, mitochondrial (Echdc2) from Mus musculus (Mouse).